The chain runs to 947 residues: Glutamate receptor 2.8 (947 aa).

The first 26 residues, 1–26 (MNPKKNNNTFLSYFVCLFLLLEVGLG), serve as a signal peptide directing secretion. At 27–577 (QNQISEIKVG…NTWVFLKPWG (551 aa)) the chain is on the extracellular side. Residues Asn-42, Asn-118, Asn-333, Asn-341, Asn-348, Asn-420, Asn-478, and Asn-524 are each glycosylated (N-linked (GlcNAc...) asparagine). The helical transmembrane segment at 578 to 598 (LDLWVTTACFFVLIGFVVWLF) threads the bilayer. Residues 599-607 (EHRVNTDFR) lie on the Cytoplasmic side of the membrane. The chain crosses the membrane as a helical span at residues 608-628 (GPPHHQIGTSFWFSFSTMVFA). At 629–632 (HREK) the chain is on the cytoplasmic side. The helical transmembrane segment at 633-653 (VVSNLARFVVVVWCFVVLVLT) threads the bilayer. The Extracellular portion of the chain corresponds to 654 to 819 (QSYTANLTSF…NRLSLRSFWG (166 aa)). Residues Asn-659, Asn-704, Asn-723, and Asn-779 are each glycosylated (N-linked (GlcNAc...) asparagine). Residues 820–840 (LFLIAGIASFLALLIFVFLFL) form a helical membrane-spanning segment. Residues 841-947 (YENRHTLCDD…ESDIECVVEQ (107 aa)) lie on the Cytoplasmic side of the membrane.

The protein belongs to the glutamate-gated ion channel (TC 1.A.10.1) family. As to quaternary structure, may form heteromers. As to expression, expressed predominantly in leaves.

Its subcellular location is the membrane. Functionally, glutamate-gated receptor that probably acts as a non-selective cation channel. May be involved in light-signal transduction and calcium homeostasis via the regulation of calcium influx into cells. The sequence is that of Glutamate receptor 2.8 (GLR2.8) from Arabidopsis thaliana (Mouse-ear cress).